The primary structure comprises 373 residues: sn-glycerol-3-phosphate import ATP-binding protein UgpC 2 (373 aa).

The region spanning 4 to 234 (IDIRQVRKSY…PASTFVASFI (231 aa)) is the ABC transporter domain. Position 36–43 (36–43 (GPSGCGKS)) interacts with ATP.

Belongs to the ABC transporter superfamily. sn-glycerol-3-phosphate importer (TC 3.A.1.1.3) family. As to quaternary structure, the complex is composed of two ATP-binding proteins (UgpC), two transmembrane proteins (UgpA and UgpE) and a solute-binding protein (UgpB).

It localises to the cell inner membrane. It catalyses the reaction sn-glycerol 3-phosphate(out) + ATP + H2O = sn-glycerol 3-phosphate(in) + ADP + phosphate + H(+). In terms of biological role, part of the ABC transporter complex UgpBAEC involved in sn-glycerol-3-phosphate (G3P) import. Responsible for energy coupling to the transport system. The protein is sn-glycerol-3-phosphate import ATP-binding protein UgpC 2 of Agrobacterium fabrum (strain C58 / ATCC 33970) (Agrobacterium tumefaciens (strain C58)).